We begin with the raw amino-acid sequence, 798 residues long: Protocadherin beta-10 (798 aa).

The N-terminal stretch at 1–26 is a signal peptide; that stretch reads MAVRELCFSRQRQVLFLFLFWGVSLA. Over 27–690 the chain is Extracellular; sequence GSGFGRYSVT…AQADLLTVYL (664 aa). Cadherin domains are found at residues 35 to 133, 138 to 242, 247 to 347, 352 to 451, and 456 to 561; these read VTEE…APVF, TVLK…APQF, YETQ…PPEL, FSNS…APAF, and YTLF…SPFV. Residue Asn169 is glycosylated (N-linked (GlcNAc...) asparagine). Residues Asn418 and Asn436 are each glycosylated (N-linked (GlcNAc...) asparagine). An N-linked (GlcNAc...) asparagine glycan is attached at Asn567. The region spanning 568–671 is the Cadherin 6 domain; sequence GSAPCTELVP…LVDGFSQPYL (104 aa). A helical membrane pass occupies residues 691–711; it reads VVALASVSSLFLFSVLLFVAV. Residues 712 to 798 lie on the Cytoplasmic side of the membrane; it reads RLCRRSRAAS…FRNSFGFNIQ (87 aa).

The protein localises to the cell membrane. Functionally, potential calcium-dependent cell-adhesion protein. May be involved in the establishment and maintenance of specific neuronal connections in the brain. This is Protocadherin beta-10 (PCDHB10) from Pan troglodytes (Chimpanzee).